Reading from the N-terminus, the 1462-residue chain is MEKRPLQTSNAANIPSKTIEEMYQKKTQLEHILLRPDTYVGSIEKHTQNLWVYENDEMVHRAVSYVPGLYKIFDEILVNAADNKQRDPSMDSLKVTIDPEANTVSVYNNGDGVPVEIHQEEKVYVPELIFGHLLTSSNYDDNVKKTTGGRNGYGAKLTNIFSTEFIIETADGRRLKKYKQVFSNNMGTKCEPVITKCKASENWTKVTFKPDLEKFKMAYLEEDVVALMKKRVLDMAGCFGKTVKVELNGTLIRFKSFRDYADLFLKCAEKSKPMPLPRIHAKVGDRWEICISLSDGQFQQVSFVNSIATIKGGTHVDYITNQITTYIMNKVNKKKKDANVKAHTVKNHLWVFVNSLIDNPAFDSQTKETLTTRQASFGSKCDVPESMLKDVEKSGIVDTLLSWADFKQSKDLKKTDGTKTQRLRGCKAEDANEAGGRNSEKCTLILTEGDSAKALAMAGLSVVGRDHYGVFPLRGKLLNVREASSKQIMDNEEIQNIKKILGLQQNKEYTNVKSLRYGHLMIMADQDHDGSHIKGLLINFIHSFWPSLLKVPSFLVEFTTPVIRASHPNKTITSFYSMPEYEAWKERLGNSATSWKIKYYKGLGTSTPQEGREYFSDLGRHRKDFIWDDELDGNAIELAFSKKKAEGRKIWMRNFEPGTCRDHEAKLINYKDFVNKELILFSRADLFGSFKKKLYKEIKVAQFIGYVSEHSAYHHGEQSLASTIIGMAQDFVGSNNINLLKPNGQFGTCNLGGKDHASARYIYTELSPVTRCLFHEHDDKLLEYLNEDGKSIEPNWYMPIIPLVLVNGSEGIGTGWSSYIPNYNPREIIANVRRLLNGEELVPMDPWYKGFRGTIEKSAKEGGYIVNGTVTEIDEQTFRITELPIRKWTQDYKQFLESITDGAPNVKDPLIEDFRQNGDDAIVDIEIKMKPEKIATILQEGLFKKFKLTSTISTSNMHLFDAEGNKKFDTPEQILEEFFPLRLDYYEKSKEYILGNLNRLLLILDNKVRFILGVVNGEIIVSNRKKAELLIELKEKGFTPMPRKGKSTKPQVAGANDDDSEEQEDAEPETASQSVSVEGATWGDYDDLLSLPIGTLTLESVQKLLDEKTEKEKEYEILSGTPTTSLWLKDLDEFEKKLDELDLKYAEDDRKRASQGSKKANGFASKPAKKPPQPRKNTKKAKSVEPENDNSSMEIENAVEAAKPAEVAKPKGRAAPKKNIQKEPEDDIQSLQERLAAYNIESSGEKSQAMESEEVQQKAAGKKQNNKRGGAKKKSSTIVLESDSDNEVNDVDDDDDDFEEVQQKAAPVKKGGRKPAAQNAKKAPAKAPAKAPAAPKKRSVGTKQSAGQKLLTDMLQPAEGTGTSPEKKVRKMRESPFNKKSGSILGRAAAAKDISPIADCSAGSASNTPLSEDEVVEIAPQPARARPQRANRTQMKYALSESESEEDSDEDAELSDFEEDDD.

Residues Asn79, Asn108, 136–138 (SSN), and 149–156 (GRNGYGAK) contribute to the ATP site. Residues 332 to 334 (NKK) form an interaction with DNA region. ATP is bound at residue 365–367 (QTK). In terms of domain architecture, Toprim spans 442-556 (CTLILTEGDS…SLLKVPSFLV (115 aa)). Mg(2+) contacts are provided by Glu448, Asp525, and Asp527. Positions 671–1131 (KDFVNKELIL…PTTSLWLKDL (461 aa)) constitute a Topo IIA-type catalytic domain. The active-site O-(5'-phospho-DNA)-tyrosine intermediate is the Tyr761. An interaction with DNA region spans residues 947-956 (KLTSTISTSN). Disordered regions lie at residues 1040–1077 (PMPR…SVSV) and 1147–1462 (EDDR…EDDD). Residues 1056 to 1068 (NDDDSEEQEDAEP) are compositionally biased toward acidic residues. The segment covering 1167–1181 (PAKKPPQPRKNTKKA) has biased composition (basic residues). Low complexity predominate over residues 1198–1207 (AVEAAKPAEV). Polar residues predominate over residues 1240–1250 (IESSGEKSQAM). Positions 1260-1275 (AGKKQNNKRGGAKKKS) are enriched in basic residues. Acidic residues predominate over residues 1282–1300 (SDSDNEVNDVDDDDDDFEE). 2 stretches are compositionally biased toward low complexity: residues 1314 to 1334 (KPAA…APAA) and 1419 to 1430 (APQPARARPQRA). Residues 1442-1462 (SESEEDSDEDAELSDFEEDDD) show a composition bias toward acidic residues.

It belongs to the type II topoisomerase family. In terms of assembly, homodimer. Mg(2+) serves as cofactor. Requires Mn(2+) as cofactor. It depends on Ca(2+) as a cofactor. Abundant in proliferative tissues.

It catalyses the reaction ATP-dependent breakage, passage and rejoining of double-stranded DNA.. Control of topological states of DNA by transient breakage and subsequent rejoining of DNA strands. Topoisomerase II makes double-strand breaks. This is DNA topoisomerase 2 (TOP2) from Pisum sativum (Garden pea).